The primary structure comprises 352 residues: MSGTDKVRVNVSQTAQTPLHTSAKLPKVGVLLVNLGTPDGTSYGPMRRYLAEFLSDRRVIEWSRLIWYPILYGIVLNTRPRRSGRLYDRIWNHENNESPLRTYTRAQGEKLAKALSDQPNVVVDLAMRYGQPSIESITDRLLQQGCERIVIFPLYPQYSATTTATVNDKFFEALMKKRFMPAIRTVPSYEAEPVYIDALARSVEKHLATLSFKPEVILTSYHGIPKSYSDKGDPYRQQCLETTRLLRERLGLGEDEMRATFQSRFGPEEWLQPYTDETVKELAKNGVKSVAVLNPGFVADCLETVDEIGNEAAEEFLENGGENFSHIPCLNDSEEGMKVIETLVRRELLGWV.

Residues histidine 222 and glutamate 303 each contribute to the Fe cation site.

It belongs to the ferrochelatase family.

The protein resides in the cytoplasm. It carries out the reaction heme b + 2 H(+) = protoporphyrin IX + Fe(2+). Its pathway is porphyrin-containing compound metabolism; protoheme biosynthesis; protoheme from protoporphyrin-IX: step 1/1. In terms of biological role, catalyzes the ferrous insertion into protoporphyrin IX. This chain is Ferrochelatase, found in Brucella canis (strain ATCC 23365 / NCTC 10854 / RM-666).